A 375-amino-acid chain; its full sequence is Succinyl-diaminopimelate desuccinylase (375 aa).

Position 66 (His66) interacts with Zn(2+). Asp68 is an active-site residue. Zn(2+) is bound at residue Asp99. Glu133 functions as the Proton acceptor in the catalytic mechanism. Zn(2+)-binding residues include Glu134, Glu162, and His348.

Belongs to the peptidase M20A family. DapE subfamily. Homodimer. Zn(2+) serves as cofactor. The cofactor is Co(2+).

The enzyme catalyses N-succinyl-(2S,6S)-2,6-diaminopimelate + H2O = (2S,6S)-2,6-diaminopimelate + succinate. It functions in the pathway amino-acid biosynthesis; L-lysine biosynthesis via DAP pathway; LL-2,6-diaminopimelate from (S)-tetrahydrodipicolinate (succinylase route): step 3/3. In terms of biological role, catalyzes the hydrolysis of N-succinyl-L,L-diaminopimelic acid (SDAP), forming succinate and LL-2,6-diaminopimelate (DAP), an intermediate involved in the bacterial biosynthesis of lysine and meso-diaminopimelic acid, an essential component of bacterial cell walls. In Methylobacillus flagellatus (strain ATCC 51484 / DSM 6875 / VKM B-1610 / KT), this protein is Succinyl-diaminopimelate desuccinylase.